We begin with the raw amino-acid sequence, 136 residues long: Nucleoside diphosphate kinase (136 aa).

Residues lysine 10, phenylalanine 58, arginine 86, threonine 92, arginine 104, and asparagine 114 each contribute to the ATP site. Catalysis depends on histidine 117, which acts as the Pros-phosphohistidine intermediate.

Belongs to the NDK family. Homotetramer. Requires Mg(2+) as cofactor.

Its subcellular location is the cytoplasm. The enzyme catalyses a 2'-deoxyribonucleoside 5'-diphosphate + ATP = a 2'-deoxyribonucleoside 5'-triphosphate + ADP. It carries out the reaction a ribonucleoside 5'-diphosphate + ATP = a ribonucleoside 5'-triphosphate + ADP. Functionally, major role in the synthesis of nucleoside triphosphates other than ATP. The ATP gamma phosphate is transferred to the NDP beta phosphate via a ping-pong mechanism, using a phosphorylated active-site intermediate. The chain is Nucleoside diphosphate kinase from Mycolicibacterium gilvum (strain PYR-GCK) (Mycobacterium gilvum (strain PYR-GCK)).